The sequence spans 107 residues: L-rhamnose mutarotase (107 aa).

Tyr-21 provides a ligand contact to substrate. Catalysis depends on His-25, which acts as the Proton donor. Substrate-binding positions include Tyr-44 and 79 to 80 (WW). Residues 88–107 (ETNPDNSPKTNSLKEVFHLD) are disordered. The segment covering 90-100 (NPDNSPKTNSL) has biased composition (polar residues).

This sequence belongs to the rhamnose mutarotase family. As to quaternary structure, homodimer.

It localises to the cytoplasm. The catalysed reaction is alpha-L-rhamnose = beta-L-rhamnose. Its pathway is carbohydrate metabolism; L-rhamnose metabolism. In terms of biological role, involved in the anomeric conversion of L-rhamnose. This Flavobacterium johnsoniae (strain ATCC 17061 / DSM 2064 / JCM 8514 / BCRC 14874 / CCUG 350202 / NBRC 14942 / NCIMB 11054 / UW101) (Cytophaga johnsonae) protein is L-rhamnose mutarotase.